The primary structure comprises 713 residues: Probable arginine--tRNA ligase, cytoplasmic (713 aa).

Residues 74–113 (KNKKNGVKATSTSSPSSSTSAPAEKKAKKDGKTGGAPPKQ) are disordered. Positions 81–95 (KATSTSSPSSSTSAP) are enriched in low complexity. Basic and acidic residues predominate over residues 96-105 (AEKKAKKDGK). Residues 252–254 (SPN), H263, Y438, D442, and Q466 contribute to the L-arginine site. The short motif at 252–263 (SPNIAKEMHVGH) is the 'HIGH' region element. The interval 583–597 (NTAVYLLYAYTRIQS) is interaction with tRNA.

It belongs to the class-I aminoacyl-tRNA synthetase family.

Its subcellular location is the cytoplasm. It localises to the cytosol. The enzyme catalyses tRNA(Arg) + L-arginine + ATP = L-arginyl-tRNA(Arg) + AMP + diphosphate. Functionally, forms part of a macromolecular complex that catalyzes the attachment of specific amino acids to cognate tRNAs during protein synthesis. The chain is Probable arginine--tRNA ligase, cytoplasmic from Caenorhabditis elegans.